The primary structure comprises 673 residues: Flotillin family inner membrane protein sll1021 (673 aa).

A helical membrane pass occupies residues 60–80 (LLFFPVVIIAVIFLILVTIFL). Residues 639–673 (LQDPPSVSPPSAAVSEDDWPDLAPPTETNFSPEEI) form a disordered region. Over residues 664 to 673 (TETNFSPEEI) the composition is skewed to polar residues.

It belongs to the band 7/mec-2 family. Flotillin subfamily. As to quaternary structure, homooligomerizes.

It is found in the cell inner membrane. The protein localises to the membrane raft. Its function is as follows. Found in functional membrane microdomains (FMM) that may be equivalent to eukaryotic membrane rafts. FMMs are highly dynamic and increase in number as cells age. Flotillins are thought to be important factors in membrane fluidity. This Synechocystis sp. (strain ATCC 27184 / PCC 6803 / Kazusa) protein is Flotillin family inner membrane protein sll1021.